Here is a 734-residue protein sequence, read N- to C-terminus: Polyribonucleotide nucleotidyltransferase (734 aa).

Positions 503 and 509 each coordinate Mg(2+). Residues 570–629 (PKLSTIQVPVDAIGMIIGKGGETIRSITEETGAQINVDDDGTVTISSPNGESAAAAIETI) enclose the KH domain. One can recognise an S1 motif domain in the interval 639-713 (GTIYMGKVKD…GKIRYALSIK (75 aa)).

Belongs to the polyribonucleotide nucleotidyltransferase family. Mg(2+) is required as a cofactor.

It is found in the cytoplasm. The enzyme catalyses RNA(n+1) + phosphate = RNA(n) + a ribonucleoside 5'-diphosphate. Its function is as follows. Involved in mRNA degradation. Catalyzes the phosphorolysis of single-stranded polyribonucleotides processively in the 3'- to 5'-direction. This is Polyribonucleotide nucleotidyltransferase from Chlorobium phaeobacteroides (strain BS1).